Reading from the N-terminus, the 263-residue chain is MKNAFKDALKAGRPQIGLWLGLANSYSAELLAGAGFDWLLIDGEHAPNNVQTVLTQLQAIAPYPSQPVVRPSWNDPVQIKQLLDVGAQTLLIPMVQNADEARNAVAATRYPPAGIRGVGSALARASRWNRIPEYLHLANDAMCVLVQIETREAMSNLASILDVDGIDGVFIGPADLSADMGFAGNPQHPEVQAAIENAIVQIRAAGKAPGILMANEALAKRYLELGALFVAVGVDTTLLARGAEALAARFGVEKKLSGASGVY.

The Proton acceptor role is filled by His-45. Gln-147 is a substrate binding site. Glu-149 contacts a divalent metal cation. The substrate site is built by Ala-174 and Asp-175. Position 175 (Asp-175) interacts with a divalent metal cation.

The protein belongs to the HpcH/HpaI aldolase family. In terms of assembly, homohexamer; trimer of dimers. A divalent metal cation is required as a cofactor.

The enzyme catalyses 4-hydroxy-2-oxoheptanedioate = succinate semialdehyde + pyruvate. It functions in the pathway aromatic compound metabolism; 4-hydroxyphenylacetate degradation; pyruvate and succinate semialdehyde from 4-hydroxyphenylacetate: step 7/7. Functionally, catalyzes the reversible retro-aldol cleavage of 4-hydroxy-2-ketoheptane-1,7-dioate (HKHD) to pyruvate and succinic semialdehyde. In Salmonella typhimurium (strain LT2 / SGSC1412 / ATCC 700720), this protein is 4-hydroxy-2-oxo-heptane-1,7-dioate aldolase.